The sequence spans 650 residues: Transcription factor LHW (650 aa).

2 disordered regions span residues 381-417 (LTKVSNSSVTTPSHSSPQGSQLFEKKHGQPLGPSSVY) and 431-470 (LKREGSPRMVNKNETAKPANNRKRLKPGENPRPRPKDRQM). The segment covering 384–397 (VSNSSVTTPSHSSP) has biased composition (low complexity). The Nuclear localization signal motif lies at 451-458 (NRKRLKPG). The region spanning 455–504 (LKPGENPRPRPKDRQMIQDRVKELREIIPNGAKCSIDALLERTIKHMLFL) is the bHLH domain. The segment covering 456–470 (KPGENPRPRPKDRQM) has biased composition (basic and acidic residues).

Belongs to the bHLH protein family. LHW subfamily. In terms of assembly, homodimer. Can also interact with bHLH proteins. As to expression, expressed in both root and shoot meristems. Present in root tips.

It localises to the nucleus. In terms of biological role, transcription activator that regulates root development; promotes the production of stele cells in roots. Coordinately controls the number of all vascular cell types by regulating the size of the pool of cells from which they arise. This Arabidopsis thaliana (Mouse-ear cress) protein is Transcription factor LHW (LHW).